An 882-amino-acid chain; its full sequence is Alanine--tRNA ligase (882 aa).

4 residues coordinate Zn(2+): H570, H574, C672, and H676.

The protein belongs to the class-II aminoacyl-tRNA synthetase family. The cofactor is Zn(2+).

Its subcellular location is the cytoplasm. The catalysed reaction is tRNA(Ala) + L-alanine + ATP = L-alanyl-tRNA(Ala) + AMP + diphosphate. Its function is as follows. Catalyzes the attachment of alanine to tRNA(Ala) in a two-step reaction: alanine is first activated by ATP to form Ala-AMP and then transferred to the acceptor end of tRNA(Ala). Also edits incorrectly charged Ser-tRNA(Ala) and Gly-tRNA(Ala) via its editing domain. In Xanthomonas euvesicatoria pv. vesicatoria (strain 85-10) (Xanthomonas campestris pv. vesicatoria), this protein is Alanine--tRNA ligase.